A 156-amino-acid chain; its full sequence is Small ribosomal subunit protein uS7c (156 aa).

It belongs to the universal ribosomal protein uS7 family. Part of the 30S ribosomal subunit.

The protein resides in the plastid. The protein localises to the chloroplast. Its function is as follows. One of the primary rRNA binding proteins, it binds directly to 16S rRNA where it nucleates assembly of the head domain of the 30S subunit. The sequence is that of Small ribosomal subunit protein uS7c (rps7) from Euglena gracilis.